A 222-amino-acid chain; its full sequence is C-8 sterol isomerase ERG2 (222 aa).

The helical transmembrane segment at phenylalanine 3 to threonine 23 threads the bilayer.

It belongs to the ERG2 family.

The protein resides in the endoplasmic reticulum membrane. The enzyme catalyses fecosterol = episterol. It functions in the pathway steroid metabolism; ergosterol biosynthesis; ergosterol from zymosterol: step 2/5. With respect to regulation, catalytic activity is inhibited by the morphilines tridemorph, fenpropimorph, and fenpropidin. In terms of biological role, C-8 sterol isomerase; part of the third module of ergosterol biosynthesis pathway that includes the late steps of the pathway. ERG2 catalyzes the reaction which results in unsaturation at C-7 in the B ring of sterols and thus converts fecosterol to episterol. The third module or late pathway involves the ergosterol synthesis itself through consecutive reactions that mainly occur in the endoplasmic reticulum (ER) membrane. Firstly, the squalene synthase ERG9 catalyzes the condensation of 2 farnesyl pyrophosphate moieties to form squalene, which is the precursor of all steroids. Squalene synthase is crucial for balancing the incorporation of farnesyl diphosphate (FPP) into sterol and nonsterol isoprene synthesis. Secondly, the squalene epoxidase ERG1 catalyzes the stereospecific oxidation of squalene to (S)-2,3-epoxysqualene, which is considered to be a rate-limiting enzyme in steroid biosynthesis. Then, the lanosterol synthase ERG7 catalyzes the cyclization of (S)-2,3 oxidosqualene to lanosterol, a reaction that forms the sterol core. In the next steps, lanosterol is transformed to zymosterol through a complex process involving various demethylation, reduction and desaturation reactions. The lanosterol 14-alpha-demethylase ERG11 (also known as CYP51) catalyzes C14-demethylation of lanosterol to produce 4,4'-dimethyl cholesta-8,14,24-triene-3-beta-ol, which is critical for ergosterol biosynthesis. The C-14 reductase ERG24 reduces the C14=C15 double bond of 4,4-dimethyl-cholesta-8,14,24-trienol to produce 4,4-dimethyl-cholesta-8,24-dienol. 4,4-dimethyl-cholesta-8,24-dienol is substrate of the C-4 demethylation complex ERG25-ERG26-ERG27 in which ERG25 catalyzes the three-step monooxygenation required for the demethylation of 4,4-dimethyl and 4alpha-methylsterols, ERG26 catalyzes the oxidative decarboxylation that results in a reduction of the 3-beta-hydroxy group at the C-3 carbon to an oxo group, and ERG27 is responsible for the reduction of the keto group on the C-3. ERG28 has a role as a scaffold to help anchor ERG25, ERG26 and ERG27 to the endoplasmic reticulum and ERG29 regulates the activity of the iron-containing C4-methylsterol oxidase ERG25. Then, the sterol 24-C-methyltransferase ERG6 catalyzes the methyl transfer from S-adenosyl-methionine to the C-24 of zymosterol to form fecosterol. The C-8 sterol isomerase ERG2 catalyzes the reaction which results in unsaturation at C-7 in the B ring of sterols and thus converts fecosterol to episterol. The sterol-C5-desaturase ERG3 then catalyzes the introduction of a C-5 double bond in the B ring to produce 5-dehydroepisterol. The C-22 sterol desaturase ERG5 further converts 5-dehydroepisterol into ergosta-5,7,22,24(28)-tetraen-3beta-ol by forming the C-22(23) double bond in the sterol side chain. Finally, ergosta-5,7,22,24(28)-tetraen-3beta-ol is substrate of the C-24(28) sterol reductase ERG4 to produce ergosterol. This Saccharomyces cerevisiae (strain ATCC 204508 / S288c) (Baker's yeast) protein is C-8 sterol isomerase ERG2.